A 199-amino-acid chain; its full sequence is dITP/XTP pyrophosphatase (199 aa).

8–13 is a binding site for substrate; the sequence is TSNINK. D68 acts as the Proton acceptor in catalysis. D68 serves as a coordination point for Mg(2+). Residues S69, 155-158, K177, and 182-183 each bind substrate; these read FGYN and HR.

This sequence belongs to the HAM1 NTPase family. Homodimer. The cofactor is Mg(2+).

The catalysed reaction is XTP + H2O = XMP + diphosphate + H(+). It carries out the reaction dITP + H2O = dIMP + diphosphate + H(+). The enzyme catalyses ITP + H2O = IMP + diphosphate + H(+). Pyrophosphatase that catalyzes the hydrolysis of nucleoside triphosphates to their monophosphate derivatives, with a high preference for the non-canonical purine nucleotides XTP (xanthosine triphosphate), dITP (deoxyinosine triphosphate) and ITP. Seems to function as a house-cleaning enzyme that removes non-canonical purine nucleotides from the nucleotide pool, thus preventing their incorporation into DNA/RNA and avoiding chromosomal lesions. This Borrelia recurrentis (strain A1) protein is dITP/XTP pyrophosphatase.